The primary structure comprises 167 residues: NAD(P)H-quinone oxidoreductase subunit I, chloroplastic (167 aa).

4Fe-4S ferredoxin-type domains lie at 55–84 and 95–124; these read GRIHFEFDKCIACEVCVRVCPIDLPVVDWK and LNYSIDFGICIFCGNCVEYCPTNCLSMTEE. C64, C67, C70, C74, C104, C107, C110, and C114 together coordinate [4Fe-4S] cluster.

Belongs to the complex I 23 kDa subunit family. In terms of assembly, NDH is composed of at least 16 different subunits, 5 of which are encoded in the nucleus. The cofactor is [4Fe-4S] cluster.

It localises to the plastid. The protein localises to the chloroplast thylakoid membrane. The catalysed reaction is a plastoquinone + NADH + (n+1) H(+)(in) = a plastoquinol + NAD(+) + n H(+)(out). It carries out the reaction a plastoquinone + NADPH + (n+1) H(+)(in) = a plastoquinol + NADP(+) + n H(+)(out). Functionally, NDH shuttles electrons from NAD(P)H:plastoquinone, via FMN and iron-sulfur (Fe-S) centers, to quinones in the photosynthetic chain and possibly in a chloroplast respiratory chain. The immediate electron acceptor for the enzyme in this species is believed to be plastoquinone. Couples the redox reaction to proton translocation, and thus conserves the redox energy in a proton gradient. This Draba nemorosa (Woodland whitlowgrass) protein is NAD(P)H-quinone oxidoreductase subunit I, chloroplastic.